A 359-amino-acid polypeptide reads, in one-letter code: uncharacterized protein (359 aa).

The 267-residue stretch at 43-309 folds into the Protein kinase domain; that stretch reads YHLIRKLGSG…VLDFLGDDWG (267 aa). ATP is bound by residues 49–57 and Lys-72; that span reads LGSGSYGRV. Asp-163 acts as the Proton acceptor in catalysis. Residues 314–359 are disordered; that stretch reads REGPGVLGSAVSYEDREEGGSSLEEWTDEGDDSKSGGRTGTDGGAP. Residues 350-359 are compositionally biased toward gly residues; that stretch reads GRTGTDGGAP.

Belongs to the protein kinase superfamily. Ser/Thr protein kinase family. STKL subfamily.

It catalyses the reaction L-seryl-[protein] + ATP = O-phospho-L-seryl-[protein] + ADP + H(+). The enzyme catalyses L-threonyl-[protein] + ATP = O-phospho-L-threonyl-[protein] + ADP + H(+). This is an uncharacterized protein from Homo sapiens (Human).